We begin with the raw amino-acid sequence, 122 residues long: Small ribosomal subunit protein bS16 (122 aa).

The protein belongs to the bacterial ribosomal protein bS16 family.

This chain is Small ribosomal subunit protein bS16, found in Prochlorococcus marinus (strain MIT 9313).